A 124-amino-acid chain; its full sequence is Fluoride-specific ion channel FluC (124 aa).

Helical transmembrane passes span 4 to 24, 35 to 55, 63 to 83, and 96 to 116; these read IFYIALGGGLGSVLRYLTTLV, YATFVTNIAGCLLIGLFFGYL, PYLKFFLITGLCGGYTTFSAF, and ILIAFLYISLSVFLGLMATWT. Residues Gly75 and Thr78 each contribute to the Na(+) site.

It belongs to the fluoride channel Fluc/FEX (TC 1.A.43) family.

The protein localises to the cell inner membrane. It carries out the reaction fluoride(in) = fluoride(out). Its activity is regulated as follows. Na(+) is not transported, but it plays an essential structural role and its presence is essential for fluoride channel function. Its function is as follows. Fluoride-specific ion channel. Important for reducing fluoride concentration in the cell, thus reducing its toxicity. This is Fluoride-specific ion channel FluC from Flavobacterium psychrophilum (strain ATCC 49511 / DSM 21280 / CIP 103535 / JIP02/86).